We begin with the raw amino-acid sequence, 497 residues long: Protein nucleotidyltransferase YdiU (497 aa).

Residues G92, G94, R95, K114, D126, G127, R177, and R184 each contribute to the ATP site. D261 (proton acceptor) is an active-site residue. Mg(2+) is bound by residues N262 and D271. D271 is a binding site for ATP.

The protein belongs to the SELO family. Mg(2+) is required as a cofactor. Mn(2+) serves as cofactor.

The enzyme catalyses L-seryl-[protein] + ATP = 3-O-(5'-adenylyl)-L-seryl-[protein] + diphosphate. It carries out the reaction L-threonyl-[protein] + ATP = 3-O-(5'-adenylyl)-L-threonyl-[protein] + diphosphate. It catalyses the reaction L-tyrosyl-[protein] + ATP = O-(5'-adenylyl)-L-tyrosyl-[protein] + diphosphate. The catalysed reaction is L-histidyl-[protein] + UTP = N(tele)-(5'-uridylyl)-L-histidyl-[protein] + diphosphate. The enzyme catalyses L-seryl-[protein] + UTP = O-(5'-uridylyl)-L-seryl-[protein] + diphosphate. It carries out the reaction L-tyrosyl-[protein] + UTP = O-(5'-uridylyl)-L-tyrosyl-[protein] + diphosphate. Nucleotidyltransferase involved in the post-translational modification of proteins. It can catalyze the addition of adenosine monophosphate (AMP) or uridine monophosphate (UMP) to a protein, resulting in modifications known as AMPylation and UMPylation. The protein is Protein nucleotidyltransferase YdiU of Bordetella petrii (strain ATCC BAA-461 / DSM 12804 / CCUG 43448).